A 175-amino-acid chain; its full sequence is uncharacterized protein (175 aa).

Helical transmembrane passes span 21–41 (IVLD…MGPI) and 50–70 (LVGL…VFVI).

It is found in the membrane. This is an uncharacterized protein from Saccharomyces cerevisiae (strain ATCC 204508 / S288c) (Baker's yeast).